A 265-amino-acid polypeptide reads, in one-letter code: Flavin-dependent thymidylate synthase (265 aa).

Positions Gly-11–His-224 constitute a ThyX domain. Residues Ser-56, Arg-79–Arg-81, and Glu-87 contribute to the FAD site. Gln-76–Arg-79 lines the dUMP pocket. The ThyX motif signature appears at Arg-79–Ser-89. Arg-155 is a binding site for dUMP. FAD is bound by residues Asp-171–Asn-173 and His-177. Residue Arg-182 participates in dUMP binding. Arg-182 functions as the Involved in ionization of N3 of dUMP, leading to its activation in the catalytic mechanism.

It belongs to the thymidylate synthase ThyX family. In terms of assembly, homotetramer. It depends on FAD as a cofactor.

It carries out the reaction dUMP + (6R)-5,10-methylene-5,6,7,8-tetrahydrofolate + NADPH + H(+) = dTMP + (6S)-5,6,7,8-tetrahydrofolate + NADP(+). It functions in the pathway pyrimidine metabolism; dTTP biosynthesis. Catalyzes the reductive methylation of 2'-deoxyuridine-5'-monophosphate (dUMP) to 2'-deoxythymidine-5'-monophosphate (dTMP) while utilizing 5,10-methylenetetrahydrofolate (mTHF) as the methyl donor, and NADPH and FADH(2) as the reductant. The sequence is that of Flavin-dependent thymidylate synthase from Borreliella burgdorferi (strain ATCC 35210 / DSM 4680 / CIP 102532 / B31) (Borrelia burgdorferi).